A 388-amino-acid chain; its full sequence is Probable proton-coupled zinc antiporter SLC30A3 (388 aa).

A compositionally biased stretch (polar residues) spans 1–13 (MEPSPTTGGSETT). Disordered stretches follow at residues 1–30 (MEPS…GLRL) and 35–54 (TEAP…SFHH). The Cytoplasmic segment spans residues 1–75 (MEPSPTTGGS…TPERMQAQRQ (75 aa)). A helical membrane pass occupies residues 76–96 (LCTACAVCCVFMAGEVVGGYL). Residues 97-105 (AHSLAIMTD) are Lumenal-facing. A helical transmembrane segment spans residues 106 to 126 (AAHLLADVGSMMGSLFSLWLS). Residues H108 and D112 each coordinate Zn(2+). Topologically, residues 127–145 (TRPATRTMTFGWHRSETLG) are cytoplasmic. The helical transmembrane segment at 146–166 (ALASVVSLWMVTGILLYLAFI) threads the bilayer. The Lumenal portion of the chain corresponds to 167–177 (RLLHSDYHIEG). The helical transmembrane segment at 178 to 198 (GAMLLTASIAVCANLLMAFVL) threads the bilayer. Topologically, residues 199 to 235 (HQAGPPHSHGSRGAEYAPLEEGSGEPLPLGNTSVRAA) are cytoplasmic. The chain crosses the membrane as a helical span at residues 236–256 (FVHVLGDLLQSLGVLIASILI). Zn(2+) is bound by residues H238 and D242. Over 257 to 264 (YFKPQYKA) the chain is Lumenal. The helical transmembrane segment at 265-285 (ADPISTFLFSICALGSTAPTL) threads the bilayer. Residues 286 to 388 (RDVLRVLMEG…CLRCQEPPQA (103 aa)) are Cytoplasmic-facing.

Belongs to the cation diffusion facilitator (CDF) transporter (TC 2.A.4) family. SLC30A subfamily. In terms of assembly, homodimer. Homodimerization could regulate efficiency of zinc transport. Interacts with TMEM163.

It localises to the cytoplasmic vesicle. Its subcellular location is the secretory vesicle. The protein resides in the synaptic vesicle membrane. It is found in the synapse. The protein localises to the synaptosome. It localises to the late endosome membrane. Its subcellular location is the lysosome membrane. It catalyses the reaction Zn(2+)(in) + 2 H(+)(out) = Zn(2+)(out) + 2 H(+)(in). In terms of biological role, probable proton-coupled zinc ion antiporter mediating the import of zinc from cytoplasm into synaptic vesicles and participating to cellular zinc ion homeostasis in the brain. This is Probable proton-coupled zinc antiporter SLC30A3 from Bos taurus (Bovine).